Consider the following 410-residue polypeptide: Pyrophosphate--fructose 6-phosphate 1-phosphotransferase (410 aa).

Position 12 (Gly-12) interacts with diphosphate. Residue Asp-121 participates in Mg(2+) binding. Residues 149-151 (TID), 194-196 (MGR), Glu-266, and 323-326 (YFSR) contribute to the substrate site. Asp-151 acts as the Proton acceptor in catalysis.

This sequence belongs to the phosphofructokinase type A (PFKA) family. PPi-dependent PFK group II subfamily. Clade 'P' sub-subfamily. As to quaternary structure, homodimer or homotetramer. Mg(2+) is required as a cofactor.

Its subcellular location is the cytoplasm. The enzyme catalyses beta-D-fructose 6-phosphate + diphosphate = beta-D-fructose 1,6-bisphosphate + phosphate + H(+). The protein operates within carbohydrate degradation; glycolysis; D-glyceraldehyde 3-phosphate and glycerone phosphate from D-glucose: step 3/4. Its activity is regulated as follows. Non-allosteric. Functionally, catalyzes the phosphorylation of D-fructose 6-phosphate, the first committing step of glycolysis. Uses inorganic phosphate (PPi) as phosphoryl donor instead of ATP like common ATP-dependent phosphofructokinases (ATP-PFKs), which renders the reaction reversible, and can thus function both in glycolysis and gluconeogenesis. Consistently, PPi-PFK can replace the enzymes of both the forward (ATP-PFK) and reverse (fructose-bisphosphatase (FBPase)) reactions. This chain is Pyrophosphate--fructose 6-phosphate 1-phosphotransferase, found in Mastigamoeba balamuthi (Phreatamoeba balamuthi).